Here is a 361-residue protein sequence, read N- to C-terminus: G2/mitotic-specific cyclin-B1 (361 aa).

A compositionally biased stretch (polar residues) spans 1 to 13 (MLRATNNRRTSNN). Residues 1–33 (MLRATNNRRTSNNVEKDSLQMAKHGNGPLKPVN) are disordered.

The protein belongs to the cyclin family. Cyclin AB subfamily. Interacts with the CDK1 protein kinase to form a serine/threonine kinase holoenzyme complex also known as maturation promoting factor (MPF). The cyclin subunit imparts substrate specificity to the complex. Interacts with E3 ubiquitin-protein ligase etc-1. Ubiquitinated by etc-1 likely during meiosis, resulting in its degradation.

The protein resides in the cytoplasm. In terms of biological role, essential for the control of the cell cycle at the G2/M (mitosis) transition. The sequence is that of G2/mitotic-specific cyclin-B1 (cyb-1) from Caenorhabditis elegans.